The sequence spans 94 residues: Small ribosomal subunit protein uS19 (94 aa).

The protein belongs to the universal ribosomal protein uS19 family.

Protein S19 forms a complex with S13 that binds strongly to the 16S ribosomal RNA. This is Small ribosomal subunit protein uS19 from Wolbachia pipientis wMel.